The primary structure comprises 54 residues: Glutathione S-transferase 6.7 (54 aa).

The protein belongs to the GST superfamily. Theta family. In terms of assembly, homodimer. The N-terminus is blocked.

The protein localises to the cytoplasm. The catalysed reaction is RX + glutathione = an S-substituted glutathione + a halide anion + H(+). Conjugation of reduced glutathione to a wide number of exogenous and endogenous hydrophobic electrophiles. This is Glutathione S-transferase 6.7 from Dicentrarchus labrax (European seabass).